The primary structure comprises 473 residues: ATP synthase subunit beta, chloroplastic (473 aa).

Residue 172–179 (GGAGVGKT) coordinates ATP.

Belongs to the ATPase alpha/beta chains family. In terms of assembly, F-type ATPases have 2 components, CF(1) - the catalytic core - and CF(0) - the membrane proton channel. CF(1) has five subunits: alpha(3), beta(3), gamma(1), delta(1), epsilon(1). CF(0) has four main subunits: a(1), b(1), b'(1) and c(9-12).

It localises to the plastid. Its subcellular location is the chloroplast thylakoid membrane. The catalysed reaction is ATP + H2O + 4 H(+)(in) = ADP + phosphate + 5 H(+)(out). In terms of biological role, produces ATP from ADP in the presence of a proton gradient across the membrane. The catalytic sites are hosted primarily by the beta subunits. This is ATP synthase subunit beta, chloroplastic from Equisetum arvense (Field horsetail).